Consider the following 90-residue polypeptide: Inner kinetochore subunit MHF1 (90 aa).

Belongs to the TAF9 family. CENP-S/MHF1 subfamily. In terms of assembly, the MHF histone-fold complex is a heterotetramer of 2 MHF1-MHF2 heterodimers. Together with MPH1/FANCM, forms the FANCM-MHF complex. Component of the inner kinetochore constitutive centromere-associated network (CCAN) (also known as central kinetochore CTF19 complex in yeast), which is composed of at least AME1, CHL4, CNN1, CTF3, CTF19, IML3, MCM16, MCM21, MCM22, MHF1, MHF2, MIF2, NKP1, NKP2, OKP1 and WIP1.

Functionally, dsDNA-binding component of a FANCM-MHF complex involved in DNA damage repair and genome maintenance. FANCM-MHF promotes gene conversion at blocked replication forks, probably by reversal of the stalled fork. Component of the kinetochore, a multiprotein complex that assembles on centromeric DNA and attaches chromosomes to spindle microtubules, mediating chromosome segregation and sister chromatid segregation during meiosis and mitosis. Component of the inner kinetochore constitutive centromere-associated network (CCAN), which serves as a structural platform for outer kinetochore assembly. The polypeptide is Inner kinetochore subunit MHF1 (Saccharomyces cerevisiae (strain ATCC 204508 / S288c) (Baker's yeast)).